A 49-amino-acid polypeptide reads, in one-letter code: U3-plectoxin-Pt1a (49 aa).

Intrachain disulfides connect Cys-2/Cys-16, Cys-9/Cys-30, Cys-15/Cys-41, Cys-32/Cys-39, and Cys-45/Cys-49.

Expressed by the venom gland.

It localises to the secreted. Its function is as follows. Potent toxin that may paralyze and/or kill insect pests such as H.virescens (lepidoptera), S.exigua (beet armyworm) and M.sexta (tobacco hornworm). The protein is U3-plectoxin-Pt1a of Plectreurys tristis (Spider).